The primary structure comprises 94 residues: Integration host factor subunit beta (94 aa).

This sequence belongs to the bacterial histone-like protein family. As to quaternary structure, heterodimer of an alpha and a beta chain.

Its function is as follows. This protein is one of the two subunits of integration host factor, a specific DNA-binding protein that functions in genetic recombination as well as in transcriptional and translational control. In Brucella abortus (strain S19), this protein is Integration host factor subunit beta.